Reading from the N-terminus, the 430-residue chain is Pre-mRNA-processing protein 45 (430 aa).

The span at 1–26 shows a compositional bias: polar residues; the sequence is MSFRTLSSLLPSPQNSEVSESSAFSR. Disordered regions lie at residues 1 to 28, 280 to 299, and 370 to 430; these read MSFR…SRQS, MERN…NKMS, and PTTG…PHTS.

It belongs to the SNW family. As to quaternary structure, associated with the spliceosome.

It is found in the nucleus. In terms of biological role, involved in pre-mRNA splicing. In Kluyveromyces lactis (strain ATCC 8585 / CBS 2359 / DSM 70799 / NBRC 1267 / NRRL Y-1140 / WM37) (Yeast), this protein is Pre-mRNA-processing protein 45 (PRP45).